A 205-amino-acid chain; its full sequence is Small ribosomal subunit protein uS4 (205 aa).

The segment at isoleucine 19 to leucine 45 is disordered. The S4 RNA-binding domain occupies serine 94–valine 157.

Belongs to the universal ribosomal protein uS4 family. Part of the 30S ribosomal subunit. Contacts protein S5. The interaction surface between S4 and S5 is involved in control of translational fidelity.

In terms of biological role, one of the primary rRNA binding proteins, it binds directly to 16S rRNA where it nucleates assembly of the body of the 30S subunit. Its function is as follows. With S5 and S12 plays an important role in translational accuracy. This Brucella suis biovar 1 (strain 1330) protein is Small ribosomal subunit protein uS4.